A 187-amino-acid chain; its full sequence is Ribosome maturation factor RimM (187 aa).

Positions 1-17 (MTSTPSPSTADPNSTND) are enriched in polar residues. The tract at residues 1–21 (MTSTPSPSTADPNSTNDWLPV) is disordered. A PRC barrel domain is found at 111–184 (EGEFHLLDLV…WLLLTPPPGL (74 aa)).

The protein belongs to the RimM family. Binds ribosomal protein uS19.

It is found in the cytoplasm. Functionally, an accessory protein needed during the final step in the assembly of 30S ribosomal subunit, possibly for assembly of the head region. Essential for efficient processing of 16S rRNA. May be needed both before and after RbfA during the maturation of 16S rRNA. It has affinity for free ribosomal 30S subunits but not for 70S ribosomes. The polypeptide is Ribosome maturation factor RimM (Synechococcus sp. (strain CC9311)).